The chain runs to 372 residues: Protein phosphatase Mn(2+)-dependent 1K (372 aa).

The N-terminal 29 residues, 1–29 (MLSAAFITLLRSGGNQVKKRVLLSSILLQ), are a transit peptide targeting the mitochondrion. The interval 46–61 (RCSRFDPDGSGQPATW) is critical for association with the BCKDH complex. In terms of domain architecture, PPM-type phosphatase spans 94-346 (NVGCASLIGK…DNSTAVVVPF (253 aa)). Mn(2+) contacts are provided by aspartate 127 and glycine 128. At serine 248 the chain carries Phosphoserine. Residues aspartate 298 and aspartate 337 each coordinate Mn(2+).

The protein belongs to the PP2C family. Monomer. Interacts with E1 and E2 components of the branched-chain alpha-ketoacid dehydrogenase (BCKDH) complex; this interaction requires colocalization in mitochondria. Interacts with BCKDHA but not with BCKDHB of the E1 component. Interacts with the 24-meric E2 core composed of DBT monomers with a 24:1 stoichiometry; the N-terminal region (residues 49-61) of PPM1K and C-terminal linker of the lipoyl domain of DBT (residues 145-160) are critical for this interaction, whereas the lipoyl prosthetic group is dispensable. Competes with BCKDK for binding to the E2 core; this interaction is modulated by branched-chain alpha-keto acids. At steady state, BCKDH holoenzyme preferentially binds BCKDK and BCKDHA is phosphorylated. In response to high levels of branched-chain alpha-keto acids, the inhibitory BCKDK is replaced by activating PPM1K leading to BCKDHA dephosphorylation and BCAA degradation. Mn(2+) is required as a cofactor. Highly expressed in the heart, kidney, brain and liver and to a lesser extent in testis, lung, spleen and adipose tissue. Very low amount in muscle (at protein level). Also expressed in the thymus (at protein level) and the diaphragm. Significantly reduced in hypertrophied hearts.

It localises to the mitochondrion matrix. It carries out the reaction O-phospho-L-seryl-[3-methyl-2-oxobutanoate dehydrogenase] + H2O = L-seryl-[3-methyl-2-oxobutanoate dehydrogenase] + phosphate. The catalysed reaction is O-phospho-L-seryl-[protein] + H2O = L-seryl-[protein] + phosphate. It participates in protein modification. In terms of biological role, serine/threonine-protein phosphatase component of macronutrients metabolism. Forms a functional kinase and phosphatase pair with BCKDK, serving as a metabolic regulatory node that coordinates branched-chain amino acids (BCAAs) with glucose and lipid metabolism via two distinct phosphoprotein targets: mitochondrial BCKDHA subunit of the branched-chain alpha-ketoacid dehydrogenase (BCKDH) complex and cytosolic ACLY, a lipogenic enzyme of Krebs cycle. At high levels of branched-chain ketoacids, dephosphorylates and activates mitochondrial BCKDH complex, a multisubunit complex consisting of three multimeric components each involved in different steps of BCAA catabolism: E1 composed of BCKDHA and BCKDHB, E2 core composed of DBT monomers, and E3 composed of DLD monomers. Tightly associates with the E2 component of BCKDH complex and dephosphorylates BCKDHA on Ser-334. Regulates the reversible phosphorylation of ACLY in response to changes in cellular carbohydrate abundance such as occurs during fasting to feeding metabolic transition. At fasting state, appears to dephosphorylate ACLY on Ser-455 and inactivate it. Refeeding stimulates MLXIPL/ChREBP transcription factor, leading to increased BCKDK to PPM1K expression ratio, phosphorylation and activation of ACLY that ultimately results in the generation of malonyl-CoA and oxaloacetate immediate substrates of de novo lipogenesis and gluconeogenesis, respectively. Recognizes phosphosites having SxS or RxxS motifs and strictly depends on Mn(2+) ions for the phosphatase activity. Regulates Ca(2+)-induced opening of mitochondrial transition pore and apoptotic cell death. The chain is Protein phosphatase Mn(2+)-dependent 1K from Mus musculus (Mouse).